Consider the following 354-residue polypeptide: Probable L-ascorbate-6-phosphate lactonase UlaG (354 aa).

Belongs to the UlaG family. A divalent metal cation is required as a cofactor.

The protein resides in the cytoplasm. The catalysed reaction is L-ascorbate 6-phosphate + H2O = 3-dehydro-L-gulonate 6-phosphate. Its pathway is cofactor degradation; L-ascorbate degradation; D-xylulose 5-phosphate from L-ascorbate: step 1/4. Probably catalyzes the hydrolysis of L-ascorbate-6-P into 3-keto-L-gulonate-6-P. Is essential for L-ascorbate utilization under anaerobic conditions. In Salmonella choleraesuis (strain SC-B67), this protein is Probable L-ascorbate-6-phosphate lactonase UlaG.